The sequence spans 269 residues: Tryptophan synthase alpha chain (269 aa).

Active-site proton acceptor residues include glutamate 49 and aspartate 60.

This sequence belongs to the TrpA family. As to quaternary structure, tetramer of two alpha and two beta chains.

The catalysed reaction is (1S,2R)-1-C-(indol-3-yl)glycerol 3-phosphate + L-serine = D-glyceraldehyde 3-phosphate + L-tryptophan + H2O. It participates in amino-acid biosynthesis; L-tryptophan biosynthesis; L-tryptophan from chorismate: step 5/5. Functionally, the alpha subunit is responsible for the aldol cleavage of indoleglycerol phosphate to indole and glyceraldehyde 3-phosphate. The sequence is that of Tryptophan synthase alpha chain from Buchnera aphidicola subsp. Schlechtendalia chinensis.